Here is a 432-residue protein sequence, read N- to C-terminus: Enolase (432 aa).

Glutamine 167 provides a ligand contact to (2R)-2-phosphoglycerate. Residue glutamate 209 is the Proton donor of the active site. Residues aspartate 246, glutamate 290, and aspartate 317 each contribute to the Mg(2+) site. Residues lysine 342, arginine 371, serine 372, and lysine 393 each contribute to the (2R)-2-phosphoglycerate site. Lysine 342 serves as the catalytic Proton acceptor.

This sequence belongs to the enolase family. As to quaternary structure, component of the RNA degradosome, a multiprotein complex involved in RNA processing and mRNA degradation. Requires Mg(2+) as cofactor.

Its subcellular location is the cytoplasm. The protein localises to the secreted. It localises to the cell surface. It catalyses the reaction (2R)-2-phosphoglycerate = phosphoenolpyruvate + H2O. It participates in carbohydrate degradation; glycolysis; pyruvate from D-glyceraldehyde 3-phosphate: step 4/5. Its function is as follows. Catalyzes the reversible conversion of 2-phosphoglycerate (2-PG) into phosphoenolpyruvate (PEP). It is essential for the degradation of carbohydrates via glycolysis. This Salmonella agona (strain SL483) protein is Enolase.